A 208-amino-acid chain; its full sequence is dITP/XTP pyrophosphatase (208 aa).

Position 7–12 (7–12) interacts with substrate; that stretch reads SNNAKK. Positions 39 and 68 each coordinate Mg(2+). Asp68 (proton acceptor) is an active-site residue. Residues Ser69, 162–165, Lys185, and 190–191 each bind substrate; these read FGYD and HR.

The protein belongs to the HAM1 NTPase family. In terms of assembly, homodimer. It depends on Mg(2+) as a cofactor.

It carries out the reaction XTP + H2O = XMP + diphosphate + H(+). It catalyses the reaction dITP + H2O = dIMP + diphosphate + H(+). The enzyme catalyses ITP + H2O = IMP + diphosphate + H(+). In terms of biological role, pyrophosphatase that catalyzes the hydrolysis of nucleoside triphosphates to their monophosphate derivatives, with a high preference for the non-canonical purine nucleotides XTP (xanthosine triphosphate), dITP (deoxyinosine triphosphate) and ITP. Seems to function as a house-cleaning enzyme that removes non-canonical purine nucleotides from the nucleotide pool, thus preventing their incorporation into DNA/RNA and avoiding chromosomal lesions. The polypeptide is dITP/XTP pyrophosphatase (Methylibium petroleiphilum (strain ATCC BAA-1232 / LMG 22953 / PM1)).